Consider the following 336-residue polypeptide: tRNA N6-adenosine threonylcarbamoyltransferase (336 aa).

Residues histidine 114 and histidine 118 each coordinate Fe cation. Substrate-binding positions include 136-140, aspartate 169, glycine 182, aspartate 186, and asparagine 275; that span reads LVSGG. Aspartate 301 is a binding site for Fe cation.

It belongs to the KAE1 / TsaD family. It depends on Fe(2+) as a cofactor.

Its subcellular location is the cytoplasm. The catalysed reaction is L-threonylcarbamoyladenylate + adenosine(37) in tRNA = N(6)-L-threonylcarbamoyladenosine(37) in tRNA + AMP + H(+). Functionally, required for the formation of a threonylcarbamoyl group on adenosine at position 37 (t(6)A37) in tRNAs that read codons beginning with adenine. Is involved in the transfer of the threonylcarbamoyl moiety of threonylcarbamoyl-AMP (TC-AMP) to the N6 group of A37, together with TsaE and TsaB. TsaD likely plays a direct catalytic role in this reaction. This Streptococcus gordonii (strain Challis / ATCC 35105 / BCRC 15272 / CH1 / DL1 / V288) protein is tRNA N6-adenosine threonylcarbamoyltransferase.